A 479-amino-acid chain; its full sequence is Anaerobic nitric oxide reductase flavorubredoxin (479 aa).

Positions 30–210 (LRGSSYNSYL…PFSRLVTPKI (181 aa)) are zinc metallo-hydrolase. Residues histidine 79, glutamate 81, aspartate 83, histidine 147, aspartate 166, and histidine 227 each contribute to the Fe cation site. Residues 254–393 (ITIFYDTMSN…LCREHGREIA (140 aa)) enclose the Flavodoxin-like domain. Residues 260–264 (TMSNN) and 342–369 (AFGS…EMSL) contribute to the FMN site. The region spanning 423-474 (GPRMQCSVCQWIYDPAKGEPMQDVAPGTPWSEVPDNFLCPECSLGKDVFDEL) is the Rubredoxin-like domain. Positions 428, 431, 461, and 464 each coordinate Fe cation.

This sequence in the N-terminal section; belongs to the zinc metallo-hydrolase group 3 family. In terms of assembly, homotetramer. Requires Fe cation as cofactor. FMN serves as cofactor.

The protein localises to the cytoplasm. It participates in nitrogen metabolism; nitric oxide reduction. Its function is as follows. Anaerobic nitric oxide reductase; uses NADH to detoxify nitric oxide (NO), protecting several 4Fe-4S NO-sensitive enzymes. Has at least 2 reductase partners, only one of which (NorW, flavorubredoxin reductase) has been identified. NO probably binds to the di-iron center; electrons enter from the NorW at rubredoxin and are transferred sequentially to the FMN center and the di-iron center. Also able to function as an aerobic oxygen reductase. The chain is Anaerobic nitric oxide reductase flavorubredoxin from Escherichia coli O6:H1 (strain CFT073 / ATCC 700928 / UPEC).